Reading from the N-terminus, the 239-residue chain is Aspartate/glutamate leucyltransferase (239 aa).

The protein belongs to the R-transferase family. Bpt subfamily.

Its subcellular location is the cytoplasm. The enzyme catalyses N-terminal L-glutamyl-[protein] + L-leucyl-tRNA(Leu) = N-terminal L-leucyl-L-glutamyl-[protein] + tRNA(Leu) + H(+). It carries out the reaction N-terminal L-aspartyl-[protein] + L-leucyl-tRNA(Leu) = N-terminal L-leucyl-L-aspartyl-[protein] + tRNA(Leu) + H(+). Functionally, functions in the N-end rule pathway of protein degradation where it conjugates Leu from its aminoacyl-tRNA to the N-termini of proteins containing an N-terminal aspartate or glutamate. This is Aspartate/glutamate leucyltransferase from Alkalilimnicola ehrlichii (strain ATCC BAA-1101 / DSM 17681 / MLHE-1).